We begin with the raw amino-acid sequence, 401 residues long: S-adenosylmethionine synthase (401 aa).

G135 to D140 contributes to the ATP binding site.

This sequence belongs to the AdoMet synthase 2 family. It depends on Mg(2+) as a cofactor.

The catalysed reaction is L-methionine + ATP + H2O = S-adenosyl-L-methionine + phosphate + diphosphate. It participates in amino-acid biosynthesis; S-adenosyl-L-methionine biosynthesis; S-adenosyl-L-methionine from L-methionine: step 1/1. Catalyzes the formation of S-adenosylmethionine from methionine and ATP. The polypeptide is S-adenosylmethionine synthase (mat) (Methanothermobacter thermautotrophicus (strain ATCC 29096 / DSM 1053 / JCM 10044 / NBRC 100330 / Delta H) (Methanobacterium thermoautotrophicum)).